Reading from the N-terminus, the 306-residue chain is Glutaminase (306 aa).

The substrate site is built by Ser-66, Asn-116, Glu-159, Asn-166, Tyr-190, Tyr-242, and Val-260.

This sequence belongs to the glutaminase family. As to quaternary structure, homotetramer.

It catalyses the reaction L-glutamine + H2O = L-glutamate + NH4(+). In Caulobacter vibrioides (strain ATCC 19089 / CIP 103742 / CB 15) (Caulobacter crescentus), this protein is Glutaminase.